Here is a 716-residue protein sequence, read N- to C-terminus: MLCRRGSDYTAEFCHVPVSGELLKRGARDASLVTPARVASAAQTAAVPGCWPLAPLGNAMLWKSVYGGITAALKRAVGSFAFYQPLVLGINTQTGLLVTLRPAASAGEGGGDHVSPRAAIVNVSVEVDLDPAGIEASAASSTGSSLARARLCTLRDGYFLSKRDIALEVEIATKEVSFYRKYDSVQQPANKRRGDMADLFVVHERTLLLGGCKRMGVKVLLPRTFDCLVASSQSVSGLAAMALYKQWHATLFSVELPDTVVQIFAYLGPELNPCGEEVDYCCFVGFPGLPTLKASSSTTEAVRDAMAAYRLSDGLWPALGMSAFHFLAPWDPEDRWPGESEAKRVEGAVHRLQLGTEDDWGAGRVSCILESDAVMQGPWFAKFDFSAFFPTLYLLLFPANERLAEVVRLRARGQHPTLKLALVSFFGGLQHINPVAYRSIIALSNGISKRLEHEVNQRGFAICTYVKDGFWGAAGNLPSDSVSYADALVYAEELRSAAQKAALGHVSEMGFSLPEGVHLNLRLEGLFTDAISWSTHCYWLYNRFTKMEDFVGFPAKSGAGRAAKASLSALLPLVAAVCDSSDMSTLHQSVRGACEQLVAGAFAERNNPQFWSTRTGIESSTLLPPAVYRNGSLLDRDCGQREIVLTRKHDCESPSPVPWTLFPPPLVLGRIDCMVYLTSIFKTYLSMLNRAISASCDADESMNVDFPISDYAFLFT.

This sequence belongs to the herpesviridae HEPA family. Associates with the primase and the helicase to form the helicase-primase complex. Interacts with the origin-binding protein. Interacts with the polymerase catalytic subunit.

Its subcellular location is the host nucleus. Component of the helicase/primase complex. Unwinds the DNA at the replication forks and generates single-stranded DNA for both leading and lagging strand synthesis. The primase synthesizes short RNA primers on the lagging strand that the polymerase presumably elongates using dNTPs. The primase-associated factor has no known catalytic activity in the complex and may serve to facilitate the formation of the replisome by directly interacting with the origin-binding protein and the polymerase. The chain is DNA helicase/primase complex-associated protein from Equus caballus (Horse).